Reading from the N-terminus, the 296-residue chain is MYLSLLKSLNRLSPRAWDFIQLTRIDKPIGIYLLLWPTLWAVWIAGKGSPSLKTVFIFVVGVFLMRAAGCVINDFADRKVDGHVKRTEQRPLISGKVSSREALALFAVLVGLSFVLVLFTNATTIWLSFGGLALAACYPFMKRYTYYPQVVLGAAFSWGMPMAFTAETGDLPAAAWLLYIANLLWTVGYDTYYAMVDRDDDLKIGVKSTAVLFGDADRVIILTLQGLALGCLMLAGARFELGACFYIGLLAAAGCFAWEFWSTRQRERDACFKAFLHNHWAGLAIFLGIVADYAVR.

A run of 8 helical transmembrane segments spans residues 28-48, 52-72, 102-122, 146-166, 169-189, 219-239, 241-261, and 275-295; these read PIGI…AGKG, LKTV…GCVI, ALAL…FTNA, YYPQ…AFTA, GDLP…TVGY, VIIL…GARF, LGAC…WEFW, and FLHN…DYAV.

It belongs to the UbiA prenyltransferase family. It depends on Mg(2+) as a cofactor.

It is found in the cell inner membrane. It carries out the reaction all-trans-octaprenyl diphosphate + 4-hydroxybenzoate = 4-hydroxy-3-(all-trans-octaprenyl)benzoate + diphosphate. It participates in cofactor biosynthesis; ubiquinone biosynthesis. In terms of biological role, catalyzes the prenylation of para-hydroxybenzoate (PHB) with an all-trans polyprenyl group. Mediates the second step in the final reaction sequence of ubiquinone-8 (UQ-8) biosynthesis, which is the condensation of the polyisoprenoid side chain with PHB, generating the first membrane-bound Q intermediate 3-octaprenyl-4-hydroxybenzoate. This is 4-hydroxybenzoate octaprenyltransferase from Pseudomonas savastanoi pv. phaseolicola (strain 1448A / Race 6) (Pseudomonas syringae pv. phaseolicola (strain 1448A / Race 6)).